A 366-amino-acid polypeptide reads, in one-letter code: Class I histocompatibility antigen, Gogo-C*0202 alpha chain (366 aa).

Residues 1 to 24 (MRVMAPRTLILLLSGALALTETWA) form the signal peptide. The segment at 25-114 (GSHSMRYFYT…LRGYYNQSED (90 aa)) is alpha-1. The Extracellular segment spans residues 25–308 (GSHSMRYFYT…EPSSQPTIPI (284 aa)). Asparagine 110 is a glycosylation site (N-linked (GlcNAc...) asparagine). An alpha-2 region spans residues 115–206 (GSHTLQSMYG…ENGKETLQRA (92 aa)). 2 disulfides stabilise this stretch: cysteine 125/cysteine 188 and cysteine 227/cysteine 283. The tract at residues 207-298 (EPPKTHVTHH…GLPEPLTLRW (92 aa)) is alpha-3. The 89-residue stretch at 209–297 (PKTHVTHHPL…EGLPEPLTLR (89 aa)) folds into the Ig-like C1-type domain. Positions 299–308 (EPSSQPTIPI) are connecting peptide. The chain crosses the membrane as a helical span at residues 309 to 332 (VGIVVGLAVLVVLAVLGAVVTAMM). Residues 333–366 (CRRKSSGGKGGSCSQAACSNSAQGSDESLITCKA) lie on the Cytoplasmic side of the membrane.

Belongs to the MHC class I family. Heterodimer of an alpha chain and a beta chain (beta-2-microglobulin).

The protein resides in the membrane. Its function is as follows. Involved in the presentation of foreign antigens to the immune system. This Gorilla gorilla gorilla (Western lowland gorilla) protein is Class I histocompatibility antigen, Gogo-C*0202 alpha chain.